Here is a 233-residue protein sequence, read N- to C-terminus: Small ribosomal subunit protein uS7m (233 aa).

A mitochondrion-targeting transit peptide spans 1–28; sequence MAAPTGKLLVHRIRAGLTCLTQVRWSRY.

This sequence belongs to the universal ribosomal protein uS7 family. Component of the mitochondrial ribosome small subunit (28S) which comprises a 12S rRNA and about 30 distinct proteins.

The protein localises to the mitochondrion. This Xenopus laevis (African clawed frog) protein is Small ribosomal subunit protein uS7m (mrps7).